A 256-amino-acid polypeptide reads, in one-letter code: Acetyl-coenzyme A carboxylase carboxyl transferase subunit alpha (256 aa).

Positions 1 to 236 (MTKITRIIKE…KEEIAAELDS (236 aa)) constitute a CoA carboxyltransferase C-terminal domain.

It belongs to the AccA family. Acetyl-CoA carboxylase is a heterohexamer composed of biotin carboxyl carrier protein (AccB), biotin carboxylase (AccC) and two subunits each of ACCase subunit alpha (AccA) and ACCase subunit beta (AccD).

It localises to the cytoplasm. The catalysed reaction is N(6)-carboxybiotinyl-L-lysyl-[protein] + acetyl-CoA = N(6)-biotinyl-L-lysyl-[protein] + malonyl-CoA. It functions in the pathway lipid metabolism; malonyl-CoA biosynthesis; malonyl-CoA from acetyl-CoA: step 1/1. Component of the acetyl coenzyme A carboxylase (ACC) complex. First, biotin carboxylase catalyzes the carboxylation of biotin on its carrier protein (BCCP) and then the CO(2) group is transferred by the carboxyltransferase to acetyl-CoA to form malonyl-CoA. The chain is Acetyl-coenzyme A carboxylase carboxyl transferase subunit alpha from Streptococcus sanguinis (strain SK36).